A 349-amino-acid chain; its full sequence is Inositol 2-dehydrogenase (349 aa).

The protein belongs to the Gfo/Idh/MocA family. In terms of assembly, homotetramer.

The enzyme catalyses myo-inositol + NAD(+) = scyllo-inosose + NADH + H(+). In terms of biological role, involved in the oxidation of myo-inositol (MI) to 2-keto-myo-inositol (2KMI or 2-inosose). The chain is Inositol 2-dehydrogenase from Mycolicibacterium gilvum (strain PYR-GCK) (Mycobacterium gilvum (strain PYR-GCK)).